A 375-amino-acid chain; its full sequence is MGFPRILSKNNKIYTKLGEFCLSGDSFWIVCHTCQEELQTQDQFWKHIQDEHNFLHGVAKEHSRTSSYCLTDVEAAAATSGATTSQGAGSVTSVTVPLALYHCSTKYSEDDQREMDIHEAQQQQHQQQQQHQQQQQLQQQQQRDVAKELAELHANAVAVASAAAAAANESSTRSSSGIDIKIEPPCLTLPPEMQAAAAASNATIYHLPQLGPAAVPPPPPTTGFVSANVSTSTTVSTTPPNVTGSHSVMQQQAGVLTGSGLSTLSMSVGPSTAMAAALLSTQELPKDSNSTTASAGSAVSSDDGERWYICDYETCGLKFKYKSRMELHRVVHSKERRFNCELCSASFKQSCNLSTHRKKKHALRGIKSEILPQRF.

Residues 29–52 (IVCHTCQEELQTQDQFWKHIQDEH) form a C2H2-type 1 zinc finger. Basic and acidic residues predominate over residues 110 to 119 (DDQREMDIHE). Positions 110 to 142 (DDQREMDIHEAQQQQHQQQQQHQQQQQLQQQQQ) are disordered. Residues 121–142 (QQQQHQQQQQHQQQQQLQQQQQ) are compositionally biased toward low complexity. 2 consecutive C2H2-type zinc fingers follow at residues 308–332 (YICD…RVVH) and 338–361 (FNCE…KKKH).

It localises to the nucleus. May be a transcription factor for genes having (A+T) stretches in their promoter and/or enhancer regions. Binds to AT rich DNA. This Drosophila pseudoobscura pseudoobscura (Fruit fly) protein is AT-rich binding protein.